Consider the following 513-residue polypeptide: Cytochrome P450 monooxygenase eqxH (513 aa).

Residues 13–32 form a helical membrane-spanning segment; sequence QYAILCGITVFTLFIVQLSL. Residues Asn130 and Asn295 are each glycosylated (N-linked (GlcNAc...) asparagine). Cys449 lines the heme pocket.

Belongs to the cytochrome P450 family. It depends on heme as a cofactor.

Its subcellular location is the membrane. It functions in the pathway mycotoxin biosynthesis. Functionally, cytochrome P450 monooxygenase; part of the gene cluster that mediates the biosynthesis of equisetin, a trans-fused decalin-containing tetramic acid with antimicrobial activity. The PKS module of eqxS together with the enoylreductase eqxC catalyze the formation of the polyketide unit which is then conjugated to L-serine by the condensation domain of the eqxS NRPS module. Activity of the Dieckmann cyclase domain (RED) results in release of the Dieckmann product intermediate. Diels-Alderase eqx3 is involved in endo-selective Diels-Alder cycloaddition to form the decalin ring, leading to the production of N-desmethylequisetin also called trichosetin. Subsequent N-methylation is carried out by eqxD to give equisetin. This chain is Cytochrome P450 monooxygenase eqxH, found in Fusarium heterosporum.